A 133-amino-acid polypeptide reads, in one-letter code: Beta-synuclein (133 aa).

2 consecutive repeat copies span residues 20-30 (EKTKQGVTEAA) and 31-41 (EKTKEGVLYVG). Positions 20-66 (EKTKQGVTEAAEKTKEGVLYVGSKTSGVVQGVASVAEKTKEQASHLG) are 4 X 11 AA tandem repeats of [EGS]-K-T-K-[EQ]-[GQ]-V-X(4). A 3; approximate repeat occupies 42–55 (SKTSGVVQGVASVA). At S45 the chain carries Phosphoserine. Repeat 4 spans residues 56-66 (EKTKEQASHLG). The disordered stretch occupies residues 96-133 (EVAQEAAEEPLIEPLMEPEGESYEDSPQEEYQEYEPEA). Residues 97 to 133 (VAQEAAEEPLIEPLMEPEGESYEDSPQEEYQEYEPEA) show a composition bias toward acidic residues. A Phosphoserine; by BARK1, CK2 and GRK5 modification is found at S117.

The protein belongs to the synuclein family. Post-translationally, phosphorylated. Phosphorylation by G-protein coupled receptor kinases (GRK) is more efficient than phosphorylation by CK1, CK2 and CaM-kinase II. Highly expressed in the brain.

The protein resides in the cytoplasm. May be involved in neuronal plasticity. The chain is Beta-synuclein (Sncb) from Mus musculus (Mouse).